A 365-amino-acid chain; its full sequence is MLAIGLMSGTSLDGVDVALIETNGEKQVKPLNFASYPYSDTDKACLREACRRALTMAAPCFIPEDEVIYQAEHIVTLRHIQAVKDFLKKNALGNQAIKVIGFHGQTIAHRPDLGWTWQIGDGAALAQATKISVVDDFRSHDVQAGGEGAPLLPIYHWALFSEASHPLAVLNLGGIANITWIGADENDLIACDTGPANGMIDDWVKAKTGLDYDESGLIASKGVVHHDLVDAMMSQKFFSQLPPKSLDRSDFSIEAVANLSIEDGAATLTAFTAESVARSLSFFPERPSKIIVAGGGRHNVTMMKMLHDSLKMPVQPIEDFHLNGDATEAEGFAYLAVRRVFNKPISFPKTTGVPHPMTGGRIHYI.

9–16 is an ATP binding site; that stretch reads GTSLDGVD.

The protein belongs to the anhydro-N-acetylmuramic acid kinase family.

It catalyses the reaction 1,6-anhydro-N-acetyl-beta-muramate + ATP + H2O = N-acetyl-D-muramate 6-phosphate + ADP + H(+). It participates in amino-sugar metabolism; 1,6-anhydro-N-acetylmuramate degradation. Its pathway is cell wall biogenesis; peptidoglycan recycling. Its function is as follows. Catalyzes the specific phosphorylation of 1,6-anhydro-N-acetylmuramic acid (anhMurNAc) with the simultaneous cleavage of the 1,6-anhydro ring, generating MurNAc-6-P. Is required for the utilization of anhMurNAc either imported from the medium or derived from its own cell wall murein, and thus plays a role in cell wall recycling. This chain is Anhydro-N-acetylmuramic acid kinase, found in Zymomonas mobilis subsp. mobilis (strain ATCC 31821 / ZM4 / CP4).